Here is a 151-residue protein sequence, read N- to C-terminus: Large ribosomal subunit protein uL22 (151 aa).

Belongs to the universal ribosomal protein uL22 family. In terms of assembly, part of the 50S ribosomal subunit.

In terms of biological role, this protein binds specifically to 23S rRNA. It makes multiple contacts with different domains of the 23S rRNA in the assembled 50S subunit and ribosome. Functionally, the globular domain of the protein is located near the polypeptide exit tunnel on the outside of the subunit, while an extended beta-hairpin is found that lines the wall of the exit tunnel in the center of the 70S ribosome. In Methanococcoides burtonii (strain DSM 6242 / NBRC 107633 / OCM 468 / ACE-M), this protein is Large ribosomal subunit protein uL22.